A 325-amino-acid chain; its full sequence is Serine/threonine-protein phosphatase 2A activator 1 (325 aa).

It belongs to the PTPA-type PPIase family.

It localises to the cytoplasm. The protein localises to the nucleus. It catalyses the reaction [protein]-peptidylproline (omega=180) = [protein]-peptidylproline (omega=0). Functionally, PPIases accelerate the folding of proteins. It catalyzes the cis-trans isomerization of proline imidic peptide bonds in oligopeptides. Acts as a regulatory subunit for PP2A-like phosphatases modulating their activity or substrate specificity, probably by inducing a conformational change in the catalytic subunit, a direct target of the PPIase. Can reactivate inactive phosphatase PP2A-phosphatase methylesterase complexes (PP2Ai) in presence of ATP and Mg(2+) by dissociating the inactive form from the complex. This is Serine/threonine-protein phosphatase 2A activator 1 (rrd1) from Schizosaccharomyces pombe (strain 972 / ATCC 24843) (Fission yeast).